Reading from the N-terminus, the 98-residue chain is UPF0358 protein LCA_1078 (98 aa).

The protein belongs to the UPF0358 family.

This chain is UPF0358 protein LCA_1078, found in Latilactobacillus sakei subsp. sakei (strain 23K) (Lactobacillus sakei subsp. sakei).